The primary structure comprises 251 residues: Probable transcriptional regulatory protein Francci3_1368 (251 aa).

This sequence belongs to the TACO1 family.

Its subcellular location is the cytoplasm. This is Probable transcriptional regulatory protein Francci3_1368 from Frankia casuarinae (strain DSM 45818 / CECT 9043 / HFP020203 / CcI3).